Here is a 379-residue protein sequence, read N- to C-terminus: dTDP-3-amino-3,4,6-trideoxy-alpha-D-glucose transaminase (379 aa).

Residues Gly67, Gln167, 188–193 (SFYPGK), Tyr221, Tyr227, 235–237 (NSR), and Tyr318 each bind pyridoxal 5'-phosphate. Lys193 is subject to N6-(pyridoxal phosphate)lysine.

Belongs to the degT/dnrJ/eryC1 family. In terms of assembly, homodimer. Requires pyridoxal 5'-phosphate as cofactor.

The enzyme catalyses dTDP-3-amino-3,4,6-trideoxy-alpha-D-glucose + 2-oxoglutarate = dTDP-3-dehydro-4,6-dideoxy-alpha-D-glucose + L-glutamate. Its pathway is antibiotic biosynthesis. Functionally, involved in the biosynthesis of dTDP-alpha-D-desosamine, a sugar found in several bacterial macrolide antibiotics. Catalyzes the reversible transfer of the amino group from L-glutamate to the C-3 position of dTDP-3-keto-4,6-deoxyglucose to yield dTDP-3-amino-3,4,6-trideoxyglucose. In Streptomyces venezuelae, this protein is dTDP-3-amino-3,4,6-trideoxy-alpha-D-glucose transaminase.